Consider the following 455-residue polypeptide: MTISTLSNETTKSGSCSGQGKNGGKDFTYGKKCFTKEEWKEQVAKYSAMGELYANKTIHYPLKIQPNSSGGSQDEGFATIQTTPIEPTLPRLLLNYFVSMAYEDSSIRMAKELGFIRNNKDIAVFNDLYKIKERFHIKHLIKLGRINEAMEEINSIFGLEVLEETFNATGSYTGRTDRQQQQQQQQFDIDGDLHFKLLLLNLIEMIRSHHQQENITKDSNDFILNLIQYSQNKLAIKASSSVKKMQELELAMTLLLFPLSDSADSGSIKLPKSLQNLYSISLRSKIADLVNEKLLKFIHPRIQFEISNNNSKFPDLLNSDKKIITQNFTVYNNNLVNGSNGTKITHISSDQPINEKMSSNEVTAAANSVWLNQRDGNVGTGSAATTFHNLENKNYWNQTSELLSSSNGKEKGLEFNNYYSSEFPYEPRLTQIMKLWCWCENQLHHNQIGVPRVEN.

A compositionally biased stretch (polar residues) spans 1–19 (MTISTLSNETTKSGSCSGQ). Positions 1-21 (MTISTLSNETTKSGSCSGQGK) are disordered. Residues 85–117 (IEPTLPRLLLNYFVSMAYEDSSIRMAKELGFIR) form the LisH domain. The CTLH domain occupies 130–213 (KIKERFHIKH…EMIRSHHQQE (84 aa)).

This sequence belongs to the GID8 family. In terms of assembly, identified in the GID/CTLH complex. In the absence of stress, the complex exists as an inactive anticipatory complex (GID(Ant)), composed of VID30/GID1, the E3 ubiquitin-ligase RMD5/GID2, VID28/GID5, GID8, and the RING-like subunit FYV10/GID9, awaiting a substrate receptor to form the active E3 ligase complex. When cells are shifted to glucose-containing medium, the substrate receptor VID24/GID4 is induced and becomes part of the complex, named GID(SR4). Additionally, GID7 transforms the GID(SR4) E3 ligase core into a higher-order supramolecular assembly (Chelator-GID(SR4)) specifically tailored for FBP1 ubiquitination. Under osmotic or heat stress, the substrate receptor GID10 is induced and becomes part of the complex, named GID(SR10). Within the GID complex, interacts directly with VID30/GID1, RMD5/GID2 and FYV10/GID9.

It localises to the nucleus. It is found in the cytoplasm. In terms of biological role, component of the GID E3 ligase complex recruiting N termini and catalyzing ubiquitination of proteins targeted for degradation. GID E3 is regulated through assembly with interchangeable N-degron-binding substrate receptors induced by distinct environmental perturbations. Required for the adaptation to the presence of glucose in the growth medium; mediates in association with the substrate receptor VID24/GID4 the degradation of enzymes involved in gluconeogenesis when cells are shifted to glucose-containing medium. Required for proteasome-dependent catabolite degradation of fructose-1,6-bisphosphatase (FBP1), malate dehydrogenase (MDH2), and other gluconeogenic enzymes. Required also for cell cycle progression. Positively controls G1 and the timing of START. The polypeptide is GID complex subunit 8 (Saccharomyces cerevisiae (strain ATCC 204508 / S288c) (Baker's yeast)).